The chain runs to 237 residues: UDP-2,3-diacylglucosamine hydrolase (237 aa).

Mn(2+) is bound by residues aspartate 9, histidine 11, aspartate 42, asparagine 80, and histidine 115. Asparagine 80 to arginine 81 is a binding site for substrate. Residues aspartate 123, serine 161, lysine 165, lysine 168, and histidine 196 each coordinate substrate. Positions 196 and 198 each coordinate Mn(2+).

This sequence belongs to the LpxH family. It depends on Mn(2+) as a cofactor.

It is found in the cell inner membrane. The protein localises to the cytoplasm. The catalysed reaction is UDP-2-N,3-O-bis[(3R)-3-hydroxytetradecanoyl]-alpha-D-glucosamine + H2O = 2-N,3-O-bis[(3R)-3-hydroxytetradecanoyl]-alpha-D-glucosaminyl 1-phosphate + UMP + 2 H(+). It functions in the pathway glycolipid biosynthesis; lipid IV(A) biosynthesis; lipid IV(A) from (3R)-3-hydroxytetradecanoyl-[acyl-carrier-protein] and UDP-N-acetyl-alpha-D-glucosamine: step 4/6. Hydrolyzes the pyrophosphate bond of UDP-2,3-diacylglucosamine to yield 2,3-diacylglucosamine 1-phosphate (lipid X) and UMP by catalyzing the attack of water at the alpha-P atom. Involved in the biosynthesis of lipid A, a phosphorylated glycolipid that anchors the lipopolysaccharide to the outer membrane of the cell. The protein is UDP-2,3-diacylglucosamine hydrolase of Haemophilus influenzae (strain ATCC 51907 / DSM 11121 / KW20 / Rd).